Reading from the N-terminus, the 821-residue chain is Frameshifted structural polyprotein (821 aa).

The interval 1 to 106 (MNRGFFNMLG…KPKPGKRQRM (106 aa)) is disordered. Positions 38–49 (LASQIQQLTTAV) are enriched in polar residues. Residues 67 to 106 (PPPRQKKQAPKQPPKPKKPKTQEKKKKQPAKPKPGKRQRM) show a composition bias toward basic residues. Positions 93–101 (KQPAKPKPG) are ribosome-binding. One can recognise a Peptidase S3 domain in the interval 114-264 (RLFDVKNEDG…KTTPEGTEEW (151 aa)). Catalysis depends on charge relay system residues H141, D163, and S215. The segment at 265–279 (SAAPLVTAMCLLGNV) is functions as an uncleaved signal peptide for the precursor of protein E3/E2. A glycan (N-linked (GlcNAc...) asparagine; by host) is linked at N278. A disulfide bond links C283 and C289. N-linked (GlcNAc...) asparagine; by host glycans are attached at residues N524 and N646. A helical transmembrane segment spans residues 696–716 (ILAVASATVAMMIGVTVAVLC). Residues C724, C744, and C745 are each lipidated (S-palmitoyl cysteine; by host). A run of 2 helical transmembrane segments spans residues 726–746 (TPYALAPNAVIPTSLALLCCV) and 764–784 (NSQPFFWVQLCIPLAAFIVLM).

This sequence belongs to the alphavirus frameshifted structural polyprotein family. As to quaternary structure, homomultimer. Interacts with host karyopherin KPNA4; this interaction allows the nuclear import of the viral capsid protein. Interacts with spike glycoprotein E2. Interacts with host IRAK1; the interaction leads to inhibition of IRAK1-dependent signaling. In terms of assembly, the precursor of protein E3/E2 and E1 form a heterodimer shortly after synthesis. Processing of the precursor of protein E3/E2 into E2 and E3 results in a heterodimer of the spike glycoproteins E2 and E1. Spike at virion surface are constituted of three E2-E1 heterodimers. Specific enzymatic cleavages in vivo yield mature proteins. Capsid protein is auto-cleaved during polyprotein translation, unmasking a signal peptide at the N-terminus of the precursor of E3/E2. The remaining polyprotein is then targeted to the host endoplasmic reticulum, where host signal peptidase cleaves it into pE2 and TF. pE2 is further processed to mature E3 and E2 by host furin in trans-Golgi vesicle. Post-translationally, palmitoylated via thioester bonds. These palmitoylations may induce disruption of the C-terminus transmembrane. This would result in the reorientation of E2 C-terminus from lumenal to cytoplasmic side. In terms of processing, palmitoylated via thioester bonds.

Its subcellular location is the virion. The protein resides in the host cytoplasm. It is found in the host cell membrane. It localises to the host nucleus. The protein localises to the virion membrane. It carries out the reaction Autocatalytic release of the core protein from the N-terminus of the togavirus structural polyprotein by hydrolysis of a -Trp-|-Ser- bond.. Its function is as follows. Forms an icosahedral capsid with a T=4 symmetry composed of 240 copies of the capsid protein surrounded by a lipid membrane through which penetrate 80 spikes composed of trimers of E1-E2 heterodimers. The capsid protein binds to the viral RNA genome at a site adjacent to a ribosome binding site for viral genome translation following genome release. Possesses a protease activity that results in its autocatalytic cleavage from the nascent structural protein. Following its self-cleavage, the capsid protein transiently associates with ribosomes, and within several minutes the protein binds to viral RNA and rapidly assembles into icosahedric core particles. The resulting nucleocapsid eventually associates with the cytoplasmic domain of the spike glycoprotein E2 at the cell membrane, leading to budding and formation of mature virions. In case of infection, new virions attach to target cells and after clathrin-mediated endocytosis their membrane fuses with the host endosomal membrane. This leads to the release of the nucleocapsid into the cytoplasm, followed by an uncoating event necessary for the genomic RNA to become accessible. The uncoating might be triggered by the interaction of capsid proteins with ribosomes. Binding of ribosomes would release the genomic RNA since the same region is genomic RNA-binding and ribosome-binding. Specifically inhibits interleukin-1 receptor-associated kinase 1/IRAK1-dependent signaling during viral entry, representing a means by which the alphaviruses may evade innate immune detection and activation prior to viral gene expression. Provides the signal sequence for the translocation of the precursor of protein E3/E2 to the host endoplasmic reticulum. Furin-cleaved E3 remains associated with spike glycoprotein E1 and mediates pH protection of the latter during the transport via the secretory pathway. After virion release from the host cell, the assembly protein E3 is gradually released in the extracellular space. Functionally, plays an essential role in viral attachment to target host cell, by binding to the cell receptor. Synthesized as a pE2 precursor which is processed by furin at the cell membrane just before virion budding, giving rise to E2-E1 heterodimer. The pE2-E1 heterodimer is stable, whereas E2-E1 is unstable and dissociate at low pH. pE2 is processed at the last step, presumably to avoid E1 fusion activation before its final export to cell surface. E2 C-terminus contains a transitory transmembrane that would be disrupted by palmitoylation, resulting in reorientation of the C-terminal tail from lumenal to cytoplasmic side. This step is critical since E2 C-terminus is involved in budding by interacting with capsid proteins. This release of E2 C-terminus in cytoplasm occurs lately in protein export, and precludes premature assembly of particles at the endoplasmic reticulum membrane. In terms of biological role, plays a role in viral assembly and release. The polypeptide is Frameshifted structural polyprotein (Sindbis virus (SINV)).